We begin with the raw amino-acid sequence, 336 residues long: Probable allantoicase 2 (336 aa).

The protein belongs to the allantoicase family.

The enzyme catalyses allantoate + H2O = (S)-ureidoglycolate + urea. It participates in nitrogen metabolism; (S)-allantoin degradation; (S)-ureidoglycolate from allantoate (aminidohydrolase route): step 1/1. The protein is Probable allantoicase 2 of Burkholderia mallei (strain ATCC 23344).